The sequence spans 355 residues: Peptide chain release factor 1 (355 aa).

Q233 is subject to N5-methylglutamine.

Belongs to the prokaryotic/mitochondrial release factor family. In terms of processing, methylated by PrmC. Methylation increases the termination efficiency of RF1.

It localises to the cytoplasm. In terms of biological role, peptide chain release factor 1 directs the termination of translation in response to the peptide chain termination codons UAG and UAA. This Bacillus cereus (strain ATCC 14579 / DSM 31 / CCUG 7414 / JCM 2152 / NBRC 15305 / NCIMB 9373 / NCTC 2599 / NRRL B-3711) protein is Peptide chain release factor 1.